A 164-amino-acid chain; its full sequence is Thiol peroxidase (164 aa).

Residues 17 to 162 enclose the Thioredoxin domain; the sequence is IKVGDTFPDF…YDEVLQAAQA (146 aa). Residue Cys58 is the Cysteine sulfenic acid (-SOH) intermediate of the active site. Cys58 and Cys92 are disulfide-bonded.

It belongs to the peroxiredoxin family. Tpx subfamily. In terms of assembly, homodimer.

The catalysed reaction is a hydroperoxide + [thioredoxin]-dithiol = an alcohol + [thioredoxin]-disulfide + H2O. Thiol-specific peroxidase that catalyzes the reduction of hydrogen peroxide and organic hydroperoxides to water and alcohols, respectively. Plays a role in cell protection against oxidative stress by detoxifying peroxides. The sequence is that of Thiol peroxidase from Clostridium acetobutylicum (strain ATCC 824 / DSM 792 / JCM 1419 / IAM 19013 / LMG 5710 / NBRC 13948 / NRRL B-527 / VKM B-1787 / 2291 / W).